The primary structure comprises 357 residues: DNA replication and repair protein RecF (357 aa).

Position 30–37 (30–37 (GANGSGKT)) interacts with ATP.

It belongs to the RecF family.

Its subcellular location is the cytoplasm. The RecF protein is involved in DNA metabolism; it is required for DNA replication and normal SOS inducibility. RecF binds preferentially to single-stranded, linear DNA. It also seems to bind ATP. This chain is DNA replication and repair protein RecF, found in Salmonella heidelberg (strain SL476).